A 685-amino-acid chain; its full sequence is Allergen Cr-PI (685 aa).

An N-terminal signal peptide occupies residues 1–16 (MKTALVFAAVVAFVAA). A glycan (N-linked (GlcNAc...) asparagine) is linked at N233.

It belongs to the hemocyanin family.

Its subcellular location is the secreted. It is found in the extracellular space. Larval storage protein (LSP) which may serve as a store of amino acids for synthesis of adult proteins. The protein is Allergen Cr-PI of Periplaneta americana (American cockroach).